We begin with the raw amino-acid sequence, 140 residues long: Large-conductance mechanosensitive channel (140 aa).

3 helical membrane-spanning segments follow: residues 14-34 (VLDLAVGVIIGGAFTSIVKSL), 37-57 (YLINPLIGLFIGGIDFSDWVL), and 66-86 (FGSFINAVINFLIIAFVVFIL).

Belongs to the MscL family. In terms of assembly, homopentamer.

It localises to the cell membrane. In terms of biological role, channel that opens in response to stretch forces in the membrane lipid bilayer. May participate in the regulation of osmotic pressure changes within the cell. This Pediococcus pentosaceus (strain ATCC 25745 / CCUG 21536 / LMG 10740 / 183-1w) protein is Large-conductance mechanosensitive channel.